A 445-amino-acid polypeptide reads, in one-letter code: UPF0210 protein SPP_0289 (445 aa).

It belongs to the UPF0210 family. In terms of assembly, homodimer.

This Streptococcus pneumoniae (strain P1031) protein is UPF0210 protein SPP_0289.